The primary structure comprises 1208 residues: Calmodulin-binding transcription activator 2 (1208 aa).

A DNA-binding region (CG-1) is located at residues 30 to 160 (RCPLLPPERL…YLNVPALEDC (131 aa)). The Nuclear localization signal signature appears at 78–86 (NRKKVKYRK). Disordered stretches follow at residues 269 to 328 (ISHS…SRGG), 366 to 418 (VGSE…PCPA), and 437 to 507 (QLGA…ELEP). Positions 275–288 (PEPPPLIAPLPPEL) are enriched in pro residues. 2 stretches are compositionally biased toward low complexity: residues 294 to 305 (SPSSSSSSSSSS) and 319 to 328 (TSRGGSSRGG). Pro residues-rich tracts occupy residues 371 to 380 (SAPPAPPSPA) and 464 to 476 (TVPPVPSSPPSSP). The region spanning 544-622 (DFSPEWSYPE…LSASVLFEYR (79 aa)) is the IPT/TIG domain. ANK repeat units follow at residues 717-750 (RGMSLLHLAAAQGYARLIETLSQWRSVETGSLDL), 762-792 (FSCTPLMWACALGHLEAAVLLFCWNRQALSI), and 796-826 (LGRLPLSVAHSRGHVRLARCLEELQRQELSV). Disordered stretches follow at residues 826 to 881 (VEHP…ASDI) and 908 to 936 (NSKEPAPSPCGPPLAQDNGAAPEDADSPP). The segment covering 829–853 (PLALSPPSSSPDTGLSSASSPSELS) has biased composition (low complexity). IQ domains follow at residues 1054-1083 (LYEAARVIQTAFRKYKGRRLKEQQEVAAAV) and 1107-1136 (MTQAAILIQSKFRSYYEQKRFQQSRRAAVL). The disordered stretch occupies residues 1144-1166 (YRRRPGPPHRPSGPLPARNKGTF).

The protein belongs to the CAMTA family. As to quaternary structure, may interact with calmodulin.

It is found in the nucleus. Transcription activator. May act as tumor suppressor. This is Calmodulin-binding transcription activator 2 (Camta2) from Mus musculus (Mouse).